We begin with the raw amino-acid sequence, 200 residues long: Large ribosomal subunit protein uL4 (200 aa).

The segment at 38 to 72 is disordered; that stretch reads GRQGSKQQKTRSDVSGGGKRPWRQKGTGRARAGTI.

This sequence belongs to the universal ribosomal protein uL4 family. In terms of assembly, part of the 50S ribosomal subunit.

In terms of biological role, one of the primary rRNA binding proteins, this protein initially binds near the 5'-end of the 23S rRNA. It is important during the early stages of 50S assembly. It makes multiple contacts with different domains of the 23S rRNA in the assembled 50S subunit and ribosome. Its function is as follows. Forms part of the polypeptide exit tunnel. In Pseudomonas fluorescens (strain ATCC BAA-477 / NRRL B-23932 / Pf-5), this protein is Large ribosomal subunit protein uL4.